A 109-amino-acid chain; its full sequence is Cell division protein ZapA (109 aa).

Residues 21 to 99 adopt a coiled-coil conformation; the sequence is PDQRDALNQA…IEQALLEQGR (79 aa).

The protein belongs to the ZapA family. Type 1 subfamily. As to quaternary structure, homodimer. Interacts with FtsZ.

The protein resides in the cytoplasm. Its function is as follows. Activator of cell division through the inhibition of FtsZ GTPase activity, therefore promoting FtsZ assembly into bundles of protofilaments necessary for the formation of the division Z ring. It is recruited early at mid-cell but it is not essential for cell division. In Shigella boydii serotype 18 (strain CDC 3083-94 / BS512), this protein is Cell division protein ZapA.